Consider the following 394-residue polypeptide: Elongation factor Tu (394 aa).

A tr-type G domain is found at 10–204; sequence KPHVNVGTIG…HLDTYIPEPE (195 aa). Residues 19–26 form a G1 region; sequence GHVDHGKT. A GTP-binding site is contributed by 19 to 26; the sequence is GHVDHGKT. Residue Thr26 participates in Mg(2+) binding. Positions 60-64 are G2; that stretch reads GITIN. The segment at 81–84 is G3; the sequence is DCPG. GTP is bound by residues 81–85 and 136–139; these read DCPGH and NKCD. The tract at residues 136-139 is G4; it reads NKCD. The segment at 174–176 is G5; sequence SAL.

It belongs to the TRAFAC class translation factor GTPase superfamily. Classic translation factor GTPase family. EF-Tu/EF-1A subfamily. As to quaternary structure, monomer.

Its subcellular location is the cytoplasm. It catalyses the reaction GTP + H2O = GDP + phosphate + H(+). GTP hydrolase that promotes the GTP-dependent binding of aminoacyl-tRNA to the A-site of ribosomes during protein biosynthesis. This Aeromonas salmonicida (strain A449) protein is Elongation factor Tu.